The following is a 367-amino-acid chain: Dye-decolorizing peroxidase (367 aa).

Residue aspartate 152 is the Proton acceptor of the active site. Histidine 225 contributes to the heme binding site. The interval 311-367 (DPDGELAAAEPSDAQNDDPASASARIEETDPPNPASADDPAPADDSLGIGSLRRRDQ) is disordered. The span at 345-356 (ASADDPAPADDS) shows a compositional bias: low complexity. The segment at 358–365 (GIGSLRRR) is targeting peptide.

Belongs to the DyP-type peroxidase family. Homohexamer. Heme b serves as cofactor.

It is found in the encapsulin nanocompartment. Its function is as follows. Cargo protein of a type 1 encapsulin nanocompartment. Has both general peroxidase activity and dye-decolorizing activity. Can catalyze the oxidation of both protoporphyrinogen IX and coproporphyrinogen III to their corresponding porphyrins. Also efficiently decolorizes the dyes alizarin red and Cibacron blue F3GA. This cargo-loaded encapsulin nanocompartment is probably involved in protection against oxidative damage. The chain is Dye-decolorizing peroxidase from Brevibacterium linens.